A 201-amino-acid chain; its full sequence is Ribosome maturation factor RimP (201 aa).

The protein belongs to the RimP family.

It localises to the cytoplasm. Its function is as follows. Required for maturation of 30S ribosomal subunits. The protein is Ribosome maturation factor RimP of Acidiphilium cryptum (strain JF-5).